Reading from the N-terminus, the 66-residue chain is Clarkitoxin-I-Mdum (66 aa).

Disulfide bonds link cysteine 3-cysteine 24, cysteine 17-cysteine 42, cysteine 46-cysteine 59, and cysteine 60-cysteine 65.

Expressed by the venom gland.

It is found in the secreted. Its function is as follows. No toxicity is observed upon intravenous or intracerebroventricular injection into mice. Has no cytotoxic activity towards C2C12 cells at 100 ug/ml. This Micrurus dumerilii (Coral snake) protein is Clarkitoxin-I-Mdum.